Here is a 341-residue protein sequence, read N- to C-terminus: Anthranilate phosphoribosyltransferase (341 aa).

Residues Gly79, 82–83 (GD), Thr87, 89–92 (NIST), 107–115 (KHGNRAVSS), and Ser119 contribute to the 5-phospho-alpha-D-ribose 1-diphosphate site. Gly79 provides a ligand contact to anthranilate. Ser91 contacts Mg(2+). Position 110 (Asn110) interacts with anthranilate. Residue Arg165 participates in anthranilate binding. Mg(2+)-binding residues include Asp224 and Glu225.

This sequence belongs to the anthranilate phosphoribosyltransferase family. As to quaternary structure, homodimer. Mg(2+) is required as a cofactor.

It catalyses the reaction N-(5-phospho-beta-D-ribosyl)anthranilate + diphosphate = 5-phospho-alpha-D-ribose 1-diphosphate + anthranilate. Its pathway is amino-acid biosynthesis; L-tryptophan biosynthesis; L-tryptophan from chorismate: step 2/5. Functionally, catalyzes the transfer of the phosphoribosyl group of 5-phosphorylribose-1-pyrophosphate (PRPP) to anthranilate to yield N-(5'-phosphoribosyl)-anthranilate (PRA). In Bacillus cereus (strain AH187), this protein is Anthranilate phosphoribosyltransferase.